Here is a 163-residue protein sequence, read N- to C-terminus: HTH-type transcriptional regulator IscR (163 aa).

The 130-residue stretch at 2-131 (RLTSKGRYAV…NNITLGELVN (130 aa)) folds into the HTH rrf2-type domain. The H-T-H motif DNA-binding region spans 28 to 51 (LADISERQGISLSYLEQLFSRLRK). 3 residues coordinate [2Fe-2S] cluster: Cys92, Cys98, and Cys104.

[2Fe-2S] cluster serves as cofactor.

Regulates the transcription of several operons and genes involved in the biogenesis of Fe-S clusters and Fe-S-containing proteins. In Klebsiella pneumoniae subsp. pneumoniae (strain ATCC 700721 / MGH 78578), this protein is HTH-type transcriptional regulator IscR.